The chain runs to 373 residues: MVNTNQFIPGLEGVIASETKISFLDTVNSEIVIKGYDLLALSKTKGYLDIVHLLLEGTIPNEAEKQHLEETLKQEYDVPDEIIQVLSLLPKTAHPMDALRTGVSVLASFDTELLNREHSTNLKRAYQLLGKIPNIVANSYHILHSEEPVQPLQDLSYSANFLYMITGKKPTELEEKIFDRSLVLYSEHELPNSTFTARVIASTLSDLYGALTGAVASLKGHLHGGANEAVMEMLQDAQTVEGFKHLLHDKLSKKEKIMGFGHRVYMKKMDPRAAMMKEALKELSAVNGDDLLLQMCEAGEQIMREEKGLFPNLDYYAAPVYWKLGIPIPLYTPIFFSSRTVGLCAHVMEQHENNRIFRPRVLYTGARNLRVED.

Catalysis depends on residues His262 and Asp314.

Belongs to the citrate synthase family. As to quaternary structure, homohexamer.

The catalysed reaction is oxaloacetate + acetyl-CoA + H2O = citrate + CoA + H(+). The protein operates within carbohydrate metabolism; tricarboxylic acid cycle; isocitrate from oxaloacetate: step 1/2. This chain is Citrate synthase (ctsA), found in Heyndrickxia coagulans (Weizmannia coagulans).